A 328-amino-acid polypeptide reads, in one-letter code: Tetraacyldisaccharide 4'-kinase (328 aa).

ATP is bound at residue 55–62 (TAGGNGKT).

It belongs to the LpxK family.

The enzyme catalyses a lipid A disaccharide + ATP = a lipid IVA + ADP + H(+). Its pathway is glycolipid biosynthesis; lipid IV(A) biosynthesis; lipid IV(A) from (3R)-3-hydroxytetradecanoyl-[acyl-carrier-protein] and UDP-N-acetyl-alpha-D-glucosamine: step 6/6. In terms of biological role, transfers the gamma-phosphate of ATP to the 4'-position of a tetraacyldisaccharide 1-phosphate intermediate (termed DS-1-P) to form tetraacyldisaccharide 1,4'-bis-phosphate (lipid IVA). This Shigella dysenteriae serotype 1 (strain Sd197) protein is Tetraacyldisaccharide 4'-kinase.